A 245-amino-acid polypeptide reads, in one-letter code: Small ribosomal subunit protein uS2 (245 aa).

It belongs to the universal ribosomal protein uS2 family.

The sequence is that of Small ribosomal subunit protein uS2 from Dehalococcoides mccartyi (strain ATCC BAA-2266 / KCTC 15142 / 195) (Dehalococcoides ethenogenes (strain 195)).